The sequence spans 309 residues: Probable pyridoxal 5'-phosphate synthase subunit PDX1 (309 aa).

Asp40 is a D-ribose 5-phosphate binding site. Catalysis depends on Lys97, which acts as the Schiff-base intermediate with D-ribose 5-phosphate. Gly169 is a binding site for D-ribose 5-phosphate. Arg181 is a D-glyceraldehyde 3-phosphate binding site. D-ribose 5-phosphate is bound by residues Gly230 and Gly251–Ser252.

This sequence belongs to the PdxS/SNZ family.

The enzyme catalyses aldehydo-D-ribose 5-phosphate + D-glyceraldehyde 3-phosphate + L-glutamine = pyridoxal 5'-phosphate + L-glutamate + phosphate + 3 H2O + H(+). It functions in the pathway cofactor biosynthesis; pyridoxal 5'-phosphate biosynthesis. In terms of biological role, catalyzes the formation of pyridoxal 5'-phosphate from ribose 5-phosphate (RBP), glyceraldehyde 3-phosphate (G3P) and ammonia. The ammonia is provided by PDX2. Can also use ribulose 5-phosphate and dihydroxyacetone phosphate as substrates, resulting from enzyme-catalyzed isomerization of RBP and G3P, respectively. Also plays an indirect role in resistance to singlet oxygen-generating photosensitizers. This Ginkgo biloba (Ginkgo) protein is Probable pyridoxal 5'-phosphate synthase subunit PDX1 (PDX1).